The following is a 1614-amino-acid chain: Low-density lipoprotein receptor-related protein 5 (1614 aa).

Residues 1-30 form the signal peptide; that stretch reads METAPTRAPPPPPPPLLLLVLYCSLVPAAA. A beta-propeller 1 region spans residues 31-287; that stretch reads SPLLLFANRR…YSPMDIQVLS (257 aa). Residues 31-1383 lie on the Extracellular side of the membrane; sequence SPLLLFANRR…PPSDDIPAHS (1353 aa). 5 LDL-receptor class B repeats span residues 74 to 118, 119 to 161, 162 to 205, 206 to 246, and 247 to 289; these read GAVY…DWVG, KKLY…DPAH, GYMY…DLEE, QKLY…TLSG, and DTLY…LSQE. 2 N-linked (GlcNAc...) asparagine glycosylation sites follow: Asn-92 and Asn-137. The 43-residue stretch at 294–336 folds into the EGF-like 1 domain; it reads FHTPCEEDNGGCSHLCLLSPREPFYSCACPTGVQLQDNGKTCK. 3 disulfides stabilise this stretch: Cys-298–Cys-309, Cys-305–Cys-320, and Cys-322–Cys-335. Residues 340 to 601 are beta-propeller 2; it reads EEVLLLARRT…AVNVAKVVGT (262 aa). 5 LDL-receptor class B repeats span residues 384-426, 427-469, 470-513, 514-556, and 557-599; these read GYVY…DWVA, RNLY…HPVM, GLMY…DLQE, GKLY…LGDF, and IYWT…AKVV. 2 N-linked (GlcNAc...) asparagine glycosylation sites follow: Asn-445 and Asn-498. Positions 600-640 constitute an EGF-like 2 domain; that stretch reads GTNPCADGNGGCSHLCFFTPRATKCGCPIGLELLSDMKTCI. Intrachain disulfides connect Cys-604/Cys-615, Cys-611/Cys-624, and Cys-626/Cys-639. A beta-propeller 3 region spans residues 643-902; sequence EAFLVFTSRA…VFHSSRQDGL (260 aa). 5 LDL-receptor class B repeats span residues 686-728, 729-771, 772-814, 815-854, and 855-897; these read NHIY…DWMG, KNLY…DPTK, GYIY…DYAD, QRLY…TQYS, and DYIY…FHSS. Residue Asn-704 is glycosylated (N-linked (GlcNAc...) asparagine). Asn-877 carries N-linked (GlcNAc...) asparagine glycosylation. The EGF-like 3 domain occupies 901 to 941; it reads GLNDCVHSNGQCGQLCLAIPGGHRCGCASHYTLDPSSRNCS. Disulfide bonds link Cys-905-Cys-916, Cys-912-Cys-925, and Cys-927-Cys-940. A beta-propeller 4 region spans residues 944-1211; the sequence is STFLLFSQKF…AVEEVSLEEF (268 aa). LDL-receptor class B repeat units follow at residues 988 to 1034, 1035 to 1077, 1078 to 1122, 1123 to 1164, and 1165 to 1206; these read KFIY…DIYS, RTLF…NAER, GYMY…DNAL, GKLF…VLGR, and HLYW…VEEV. Positions 1002 to 1025 are disordered; that stretch reads AKDDGTQPSMLTSPSQSLSPDRQP. The span at 1007-1021 shows a compositional bias: polar residues; sequence TQPSMLTSPSQSLSP. The EGF-like 4 domain maps to 1212 to 1253; it reads SAHPCARDNGGCSHICIAKGDGTPRCSCPVHLVLLQNLLTCG. Disulfide bonds link Cys-1216–Cys-1227, Cys-1223–Cys-1237, Cys-1239–Cys-1252, Cys-1258–Cys-1272, Cys-1265–Cys-1285, Cys-1279–Cys-1294, Cys-1297–Cys-1309, Cys-1304–Cys-1322, Cys-1316–Cys-1331, Cys-1335–Cys-1347, Cys-1342–Cys-1360, and Cys-1354–Cys-1369. 3 consecutive LDL-receptor class A domains span residues 1257-1295, 1296-1332, and 1334-1370; these read TCSP…EGCP, VCSA…ANCD, and VCLP…LMCE. The helical transmembrane segment at 1384 to 1406 threads the bilayer; sequence SAIGPVIGIILSLFVMGGVYFVC. Over 1407-1614 the chain is Cytoplasmic; the sequence is QRVMCQRYTG…PPPSPCTDSS (208 aa). Residues 1474–1498 are disordered; it reads RNHVTGASSSSSSSTKATLYPPILN. Residues 1499–1505 carry the PPPSP motif A motif; the sequence is PPPSPAT. The PPPSP motif B motif lies at 1537–1544; that stretch reads PPTTPCST. Positions 1567–1599 are disordered; it reads SDSDPYPPPPTPHSQYLSAEDSCPPSPGTERSY. A PPPSP motif C motif is present at residues 1573-1580; sequence PPPPTPHS. Positions 1590 to 1595 match the PPPSP motif D motif; sequence PPSPGT. The short motif at 1604–1611 is the PPPSP motif E element; the sequence is PPPPSPCT.

This sequence belongs to the LDLR family. As to quaternary structure, homodimer; disulfide-linked. Forms phosphorylated oligomer aggregates on Wnt-signaling. Component of a WNT-signaling complex that contains a WNT protein, a FZD protein and LRP5 or LRP6. Interacts with FZD8; the interaction is formed on WNT-binding and signaling. Interacts (via the phosphorylated PPPSP motif domains) with AXIN1; the interaction prevents inhibition of beta-catenin phosphorylation and signaling and is enhanced in the presence of GSK3B and WNT1 or WNT3A. Interacts (via beta-propeller regions 3 and 4) with DKK1; the interaction, enhanced by MESD and/or KREMEN, inhibits beta-catenin signaling by preventing GSK3-mediated phosphorylation of the PPPSP motifs and subsequent, AXIN1 binding. Interacts with CSNK1E. Interacts with SOST; the interaction antagonizes canonical Wnt signaling. Interacts with APCDD1. Interacts with MESD; the interaction prevents the formation of LRP5 aggregates, targets LRP5 to the plasma membrane and, when complexed with KREMEN2, increases DKK1 binding. Interacts with CAPRIN2. In terms of processing, phosphorylation of cytoplasmic PPPSP motifs regulates the signal transduction of the Wnt signaling pathway through acting as a docking site for AXIN1. In terms of tissue distribution, widely expressed, with the highest expression levels in liver, heart, and lung and the lowest levels in brain and spleen.

It localises to the membrane. The protein resides in the endoplasmic reticulum. Its function is as follows. Acts as a coreceptor with members of the frizzled family of seven-transmembrane spanning receptors to transduce signal by Wnt proteins. Activates the canonical Wnt signaling pathway that controls cell fate determination and self-renewal during embryonic development and adult tissue regeneration. In particular, may play an important role in the development of the posterior patterning of the epiblast during gastrulation. During bone development, regulates osteoblast proliferation and differentiation thus determining bone mass. Mechanistically, the formation of the signaling complex between Wnt ligand, frizzled receptor and LRP5 coreceptor promotes the recruitment of AXIN1 to LRP5, stabilizing beta-catenin/CTNNB1 and activating TCF/LEF-mediated transcriptional programs. Acts as a coreceptor for non-Wnt proteins, such as norrin/NDP. Binding of norrin/NDP to frizzled 4/FZD4-LRP5 receptor complex triggers beta-catenin/CTNNB1-dependent signaling known to be required for retinal vascular development. Plays a role in controlling postnatal vascular regression in retina via macrophage-induced endothelial cell apoptosis. This chain is Low-density lipoprotein receptor-related protein 5, found in Mus musculus (Mouse).